Consider the following 156-residue polypeptide: Phosphoribosyl-AMP cyclohydrolase (156 aa).

Residue Asp106 participates in Mg(2+) binding. Cys107 contributes to the Zn(2+) binding site. Residues Asp108 and Asp110 each contribute to the Mg(2+) site. Zn(2+) is bound by residues Cys123 and Cys130.

Belongs to the PRA-CH family. As to quaternary structure, homodimer. The cofactor is Mg(2+). Requires Zn(2+) as cofactor.

The protein localises to the cytoplasm. The catalysed reaction is 1-(5-phospho-beta-D-ribosyl)-5'-AMP + H2O = 1-(5-phospho-beta-D-ribosyl)-5-[(5-phospho-beta-D-ribosylamino)methylideneamino]imidazole-4-carboxamide. It participates in amino-acid biosynthesis; L-histidine biosynthesis; L-histidine from 5-phospho-alpha-D-ribose 1-diphosphate: step 3/9. Functionally, catalyzes the hydrolysis of the adenine ring of phosphoribosyl-AMP. The sequence is that of Phosphoribosyl-AMP cyclohydrolase from Gluconobacter oxydans (strain 621H) (Gluconobacter suboxydans).